A 564-amino-acid polypeptide reads, in one-letter code: ATP-dependent RNA helicase DBP3 (564 aa).

Positions Thr-31–Ser-125 are disordered. A compositionally biased stretch (basic and acidic residues) spans Ala-58–Asp-73. Positions Lys-74–Lys-96 are enriched in basic residues. The span at Ser-112–Ser-125 shows a compositional bias: low complexity. The short motif at Leu-155–Ser-181 is the Q motif element. Positions Trp-184–Val-356 constitute a Helicase ATP-binding domain. Ala-197–Thr-204 lines the ATP pocket. The DEAD box signature appears at Asp-303–Asp-306. The Helicase C-terminal domain occupies Lys-385 to Gly-534.

It belongs to the DEAD box helicase family. DDX5/DBP2 subfamily.

The protein localises to the nucleus. The protein resides in the nucleolus. The enzyme catalyses ATP + H2O = ADP + phosphate + H(+). Functionally, ATP-dependent RNA helicase required for 60S ribosomal subunit synthesis. Involved in efficient pre-rRNA processing, predominantly at site A3, which is necessary for the normal formation of 25S and 5.8S rRNAs. The protein is ATP-dependent RNA helicase DBP3 (DBP3) of Candida albicans (strain SC5314 / ATCC MYA-2876) (Yeast).